Reading from the N-terminus, the 240-residue chain is MATVKELKATARPKAGKGAARAERRAGRVPAVIYGDNKPPVTISLDDKALRQSIFAGHFLTTLFNIDLDGQKYRVIPRDYALDPVKDFPLHVDFLRLGEGATIRVSVPLHVKGAELSPGVKRGGTVNIVNHTVELEAEVDHIPQFIEVDVSKLEINNSVHLNDVALPKGVKPVLREGMTLVTVVPPSGMGEEAKGGADAAAAAAGAAAPAAGAAAPAAGAAKAPAAAAAKAPAAGGDKKK.

The tract at residues 1–23 (MATVKELKATARPKAGKGAARAE) is disordered. The segment covering 10–19 (TARPKAGKGA) has biased composition (low complexity).

This sequence belongs to the bacterial ribosomal protein bL25 family. CTC subfamily. As to quaternary structure, part of the 50S ribosomal subunit; part of the 5S rRNA/L5/L18/L25 subcomplex. Contacts the 5S rRNA. Binds to the 5S rRNA independently of L5 and L18.

Functionally, this is one of the proteins that binds to the 5S RNA in the ribosome where it forms part of the central protuberance. This chain is Large ribosomal subunit protein bL25, found in Afipia carboxidovorans (strain ATCC 49405 / DSM 1227 / KCTC 32145 / OM5) (Oligotropha carboxidovorans).